The sequence spans 246 residues: 3-deoxy-manno-octulosonate cytidylyltransferase (246 aa).

Belongs to the KdsB family.

The protein localises to the cytoplasm. The enzyme catalyses 3-deoxy-alpha-D-manno-oct-2-ulosonate + CTP = CMP-3-deoxy-beta-D-manno-octulosonate + diphosphate. It participates in nucleotide-sugar biosynthesis; CMP-3-deoxy-D-manno-octulosonate biosynthesis; CMP-3-deoxy-D-manno-octulosonate from 3-deoxy-D-manno-octulosonate and CTP: step 1/1. It functions in the pathway bacterial outer membrane biogenesis; lipopolysaccharide biosynthesis. Activates KDO (a required 8-carbon sugar) for incorporation into bacterial lipopolysaccharide in Gram-negative bacteria. The polypeptide is 3-deoxy-manno-octulosonate cytidylyltransferase (Leptospira biflexa serovar Patoc (strain Patoc 1 / Ames)).